The following is a 341-amino-acid chain: HTH-type transcriptional repressor PurR (341 aa).

An HTH lacI-type domain is found at 2–56; the sequence is ATIKDVAKRANVSTTTVSHVINKTRFVAEETRNAVWAAIKELHYSPSAVARSLKV. Positions 4–23 form a DNA-binding region, H-T-H motif; that stretch reads IKDVAKRANVSTTTVSHVIN. Residues 48–56 mediate DNA binding; sequence SAVARSLKV. The hypoxanthine site is built by tyrosine 73, arginine 190, threonine 192, phenylalanine 221, and aspartate 275.

In terms of assembly, homodimer.

The protein operates within purine metabolism; purine nucleotide biosynthesis [regulation]. In terms of biological role, is the main repressor of the genes involved in the de novo synthesis of purine nucleotides, regulating purB, purC, purEK, purF, purHD, purL, purMN and guaBA expression. PurR is allosterically activated to bind its cognate DNA by binding the purine corepressors, hypoxanthine or guanine, thereby effecting transcription repression. This Shigella sonnei (strain Ss046) protein is HTH-type transcriptional repressor PurR.